Here is a 98-residue protein sequence, read N- to C-terminus: MTMVYANIFLAFITSLMGLLMYRSHLMSSLLCLEGMMLSLFVMMTVTILNNHFTLANMAPIVLLVFAACEAALGLSLLVMVSNTYGTDYVQNLNLLQC.

3 helical membrane-spanning segments follow: residues 1-21 (MTMV…GLLM), 29-49 (SLLC…VTIL), and 61-81 (IVLL…LVMV).

Belongs to the complex I subunit 4L family. Core subunit of respiratory chain NADH dehydrogenase (Complex I) which is composed of 45 different subunits.

It is found in the mitochondrion inner membrane. It catalyses the reaction a ubiquinone + NADH + 5 H(+)(in) = a ubiquinol + NAD(+) + 4 H(+)(out). Its function is as follows. Core subunit of the mitochondrial membrane respiratory chain NADH dehydrogenase (Complex I) which catalyzes electron transfer from NADH through the respiratory chain, using ubiquinone as an electron acceptor. Part of the enzyme membrane arm which is embedded in the lipid bilayer and involved in proton translocation. The polypeptide is NADH-ubiquinone oxidoreductase chain 4L (MT-ND4L) (Monachus monachus (Mediterranean monk seal)).